The chain runs to 1872 residues: Plexin-A3 (1872 aa).

Positions 1-19 (MPTVCLLPLLFFTIGGCLG) are cleaved as a signal peptide. A Sema domain is found at 20–489 (SSRPFRTFVV…SEKQVSQLPV (470 aa)). Residues 20-1220 (SSRPFRTFVV…ITADRALTLP (1201 aa)) are Extracellular-facing. Residue Asn-60 is glycosylated (N-linked (GlcNAc...) asparagine). 9 disulfides stabilise this stretch: Cys-78–Cys-87, Cys-113–Cys-121, Cys-267–Cys-388, Cys-283–Cys-339, Cys-357–Cys-376, Cys-492–Cys-509, Cys-498–Cys-540, Cys-501–Cys-518, and Cys-512–Cys-524. Asn-549 carries N-linked (GlcNAc...) asparagine glycosylation. The cysteines at positions 575 and 595 are disulfide-linked. IPT/TIG domains follow at residues 841-934 (PRIT…YSFV), 936-1021 (PTFD…YTYT), 1024-1123 (PTVT…FTYY), and 1126-1212 (PSFE…LHIT). N-linked (GlcNAc...) asparagine glycosylation is present at Asn-1163. A helical membrane pass occupies residues 1221-1241 (AMVGLAAGGGLLLLAITVVLV). Residues 1240-1294 (LVAYKRKTQDADRTLKRLQLQMDNLESRVALECKEAFAELQTDINELTNHMDGVQ) are a coiled coil. At 1242 to 1872 (AYKRKTQDAD…QIITLVSSSS (631 aa)) the chain is on the cytoplasmic side. Ser-1597 carries the post-translational modification Phosphoserine.

It belongs to the plexin family. Detected in embryonic hindbrain, spinal cord, dorsal root ganglion, trigeminal ganglion and superior cervical ganglion. In newborns, detected throughout all layers of the hippocampus.

It localises to the cell membrane. Functionally, coreceptor for SEMA3A and SEMA3F. Necessary for signaling by class 3 semaphorins and subsequent remodeling of the cytoskeleton. Plays a role in axon guidance in the developing nervous system. Regulates the migration of sympathetic neurons, but not of neural crest precursors. Required for normal dendrite spine morphology in pyramidal neurons. May play a role in regulating semaphorin-mediated programmed cell death in the developing nervous system. Class 3 semaphorins bind to a complex composed of a neuropilin and a plexin. The plexin modulates the affinity of the complex for specific semaphorins, and its cytoplasmic domain is required for the activation of down-stream signaling events in the cytoplasm. This is Plexin-A3 (Plxna3) from Mus musculus (Mouse).